Reading from the N-terminus, the 104-residue chain is Thioredoxin (104 aa).

Positions 2–104 (AIVKVTDADF…NLAEVLDKHL (103 aa)) constitute a Thioredoxin domain. A disulfide bridge connects residues Cys29 and Cys32.

Belongs to the thioredoxin family.

In terms of biological role, component of the thioredoxin-thioredoxin reductase system. Participates in various redox reactions through the reversible oxidation of its active center dithiol to a disulfide and catalyzes dithiol-disulfide exchange reactions. This Staphylococcus aureus (strain N315) protein is Thioredoxin (trxA).